Reading from the N-terminus, the 1462-residue chain is Protein peg1 (1462 aa).

Disordered stretches follow at residues 528 to 563 (SFSK…SRER) and 573 to 592 (FHST…SIAI). Low complexity-rich tracts occupy residues 538–552 (SSNS…RLGL) and 574–589 (HSTS…HSPS). Ser599 is modified (phosphoserine). The tract at residues 838–928 (SSTHQEHLSK…NCSEESLDDH (91 aa)) is disordered. A compositionally biased stretch (low complexity) spans 847 to 866 (KNLPTLNTSSSSNSSQTDLL). Residues 870–896 (GKGETKETEMQSPIESKEGLLSKDTHI) are compositionally biased toward basic and acidic residues. The residue at position 1221 (Ser1221) is a Phosphoserine. The stretch at 1342–1367 (TLIAEIADLQGLYEFTQQRLQSLNTE) forms a coiled coil.

Belongs to the CLASP family. As to quaternary structure, interacts with microtubules. Interacts with dhc1, mal3 and tea1.

Its subcellular location is the cytoplasm. It is found in the cytoskeleton. The protein resides in the spindle. It localises to the microtubule organizing center. The protein localises to the spindle pole body. Functionally, microtubule binding protein that regulates the stability of dynamic microtubules. Required for mitotic spindle formation. This is Protein peg1 (peg1) from Schizosaccharomyces pombe (strain 972 / ATCC 24843) (Fission yeast).